The following is a 573-amino-acid chain: LysM domain-containing protein ARB_01155/01156 (573 aa).

An N-terminal signal peptide occupies residues 1–18; it reads MIPRNLISGLFLLPFVVA. N-linked (GlcNAc...) asparagine glycosylation is found at Asn-46, Asn-71, and Asn-283. Residues 373 to 419 enclose the LysM domain; sequence RYYEVVAGDQCNTIALHFGITVDAFLSLNTQIDERCSNLWIAYAYCV. The segment at 375 to 405 is lysM domain; it reads YEVVAGDQCNTIALHFGITVDAFLSLNTQID.

It is found in the secreted. Functionally, might have a role in sequestration of chitin oligosaccharides (breakdown products of fungal cell walls that are released during invasion and act as triggers of host immunity) to dampen host defense. The protein is LysM domain-containing protein ARB_01155/01156 of Arthroderma benhamiae (strain ATCC MYA-4681 / CBS 112371) (Trichophyton mentagrophytes).